We begin with the raw amino-acid sequence, 180 residues long: Large ribosomal subunit protein uL5 (180 aa).

It belongs to the universal ribosomal protein uL5 family. Part of the 50S ribosomal subunit; part of the 5S rRNA/L5/L18/L25 subcomplex. Contacts the 5S rRNA and the P site tRNA. Forms a bridge to the 30S subunit in the 70S ribosome.

In terms of biological role, this is one of the proteins that bind and probably mediate the attachment of the 5S RNA into the large ribosomal subunit, where it forms part of the central protuberance. In the 70S ribosome it contacts protein S13 of the 30S subunit (bridge B1b), connecting the 2 subunits; this bridge is implicated in subunit movement. Contacts the P site tRNA; the 5S rRNA and some of its associated proteins might help stabilize positioning of ribosome-bound tRNAs. The sequence is that of Large ribosomal subunit protein uL5 from Ralstonia nicotianae (strain ATCC BAA-1114 / GMI1000) (Ralstonia solanacearum).